A 149-amino-acid polypeptide reads, in one-letter code: Putative sugar phosphate isomerase YwlF (149 aa).

Residue His-9 participates in substrate binding. Cys-66 (proton acceptor) is an active-site residue. Gly-67 to Met-72 contacts substrate. Catalysis depends on His-99, which acts as the Proton donor. Arg-133 serves as a coordination point for substrate.

This sequence belongs to the LacAB/RpiB family.

The protein is Putative sugar phosphate isomerase YwlF (ywlF) of Bacillus subtilis (strain 168).